The primary structure comprises 57 residues: Large ribosomal subunit protein bL32 (57 aa).

Belongs to the bacterial ribosomal protein bL32 family.

The sequence is that of Large ribosomal subunit protein bL32 from Bacillus licheniformis (strain ATCC 14580 / DSM 13 / JCM 2505 / CCUG 7422 / NBRC 12200 / NCIMB 9375 / NCTC 10341 / NRRL NRS-1264 / Gibson 46).